The chain runs to 145 residues: D-aminoacyl-tRNA deacylase (145 aa).

The short motif at 137 to 138 (GP) is the Gly-cisPro motif, important for rejection of L-amino acids element.

This sequence belongs to the DTD family. Homodimer.

It is found in the cytoplasm. It catalyses the reaction glycyl-tRNA(Ala) + H2O = tRNA(Ala) + glycine + H(+). The catalysed reaction is a D-aminoacyl-tRNA + H2O = a tRNA + a D-alpha-amino acid + H(+). An aminoacyl-tRNA editing enzyme that deacylates mischarged D-aminoacyl-tRNAs. Also deacylates mischarged glycyl-tRNA(Ala), protecting cells against glycine mischarging by AlaRS. Acts via tRNA-based rather than protein-based catalysis; rejects L-amino acids rather than detecting D-amino acids in the active site. By recycling D-aminoacyl-tRNA to D-amino acids and free tRNA molecules, this enzyme counteracts the toxicity associated with the formation of D-aminoacyl-tRNA entities in vivo and helps enforce protein L-homochirality. This chain is D-aminoacyl-tRNA deacylase, found in Citrobacter koseri (strain ATCC BAA-895 / CDC 4225-83 / SGSC4696).